The chain runs to 383 residues: D-alanine--D-alanine ligase (383 aa).

In terms of domain architecture, ATP-grasp spans 169–373 (KALLRAAGLP…YPQLVDRLVR (205 aa)). Position 196 to 251 (196 to 251 (QERLGLPVFVKPARGGSSIGISRVEAWADLDTAIKAARASDPKVLVESAIVGREIE)) interacts with ATP. Aspartate 327, glutamate 340, and asparagine 342 together coordinate Mg(2+).

This sequence belongs to the D-alanine--D-alanine ligase family. The cofactor is Mg(2+). Requires Mn(2+) as cofactor.

The protein localises to the cytoplasm. It carries out the reaction 2 D-alanine + ATP = D-alanyl-D-alanine + ADP + phosphate + H(+). Its pathway is cell wall biogenesis; peptidoglycan biosynthesis. In terms of biological role, cell wall formation. This chain is D-alanine--D-alanine ligase, found in Frankia casuarinae (strain DSM 45818 / CECT 9043 / HFP020203 / CcI3).